The following is a 127-amino-acid chain: Fluoride-specific ion channel FluC (127 aa).

A run of 4 helical transmembrane segments spans residues Leu-3–Gly-23, Leu-38–Ala-58, Phe-67–Leu-87, and Ile-102–Leu-122. 2 residues coordinate Na(+): Gly-77 and Thr-80.

It belongs to the fluoride channel Fluc/FEX (TC 1.A.43) family.

It is found in the cell inner membrane. The enzyme catalyses fluoride(in) = fluoride(out). Na(+) is not transported, but it plays an essential structural role and its presence is essential for fluoride channel function. Functionally, fluoride-specific ion channel. Important for reducing fluoride concentration in the cell, thus reducing its toxicity. The protein is Fluoride-specific ion channel FluC of Helicobacter acinonychis (strain Sheeba).